The chain runs to 737 residues: Prospero homeobox protein 1 (737 aa).

The segment at 1-28 (MPDHDSTALLSRQTKRRRVDIGVKRTVG) is interaction with RORG. A compositionally biased stretch (polar residues) spans 103–135 (KNGGTEPSFQASGLSSTGSEVHQEDICSNSSRD). Residues 103-147 (KNGGTEPSFQASGLSSTGSEVHQEDICSNSSRDSPPECLSPFGRP) form a disordered region. Residues S177, S179, S199, S291, and S295 each carry the phosphoserine modification. The disordered stretch occupies residues 178–221 (HSPSVALRGNENEREMAPQSVSPRESYRENKRKQKLPQQQQQSF). Residues 320–337 (MAENKPKREGSNKERDHG) are compositionally biased toward basic and acidic residues. Disordered stretches follow at residues 320-344 (MAEN…LQPE) and 444-476 (RKNS…AGFT). Residue K324 forms a Glycyl lysine isopeptide (Lys-Gly) (interchain with G-Cter in SUMO2) linkage. Positions 464–476 (LHQSPLSATAGFT) are enriched in polar residues. Phosphoserine is present on residues S511 and S514. The segment at 525–547 (RTKMSSHHLSHHPCSPAHPPSTA) is disordered. Phosphoserine is present on S557. In terms of domain architecture, Prospero-type homeo spans 577-635 (QEGLSPNHLKKAKLMFFYTRYPSSNMLKTYFSDVKFNRCITSQLIKWFSNFREFYYIQM). The homeo-Prospero stretch occupies residues 577 to 735 (QEGLSPNHLK…KSPNCLQELL (159 aa)). Residues 636–735 (EKYARQAIND…KSPNCLQELL (100 aa)) enclose the Prospero domain. Residues 723-729 (EIFKSPN) are essential for nuclear localization, interaction with RORG, repression of RORG transcriptional activator activity.

It belongs to the Prospero homeodomain family. Interacts with RORA and RORG (via AF-2 motif). Expressed in the young neurons of the subventricular region of the CNS, developing eye lens and pancreas. It is also found in the developing liver, heart and skeletal muscle. In the eye, expressed in the lens and retina at postnatal day 10. In the retina, localized to the inner nuclear layer. In the lens, localized to epithelial and fiber cells.

It is found in the nucleus. Transcription factor involved in developmental processes such as cell fate determination, gene transcriptional regulation and progenitor cell regulation in a number of organs. Plays a critical role in embryonic development and functions as a key regulatory protein in neurogenesis and the development of the heart, eye lens, liver, pancreas and the lymphatic system. Involved in the regulation of the circadian rhythm. Represses: transcription of the retinoid-related orphan receptor RORG, transcriptional activator activity of RORA and RORG and the expression of RORA/G-target genes including core clock components: BMAL1, NPAS2 and CRY1 and metabolic genes: AVPR1A and ELOVL3. The protein is Prospero homeobox protein 1 (Prox1) of Mus musculus (Mouse).